Consider the following 376-residue polypeptide: WW domain-binding protein 4 (376 aa).

Residues 11–42 (KFCDYCKCWIADNRPSVEFHERGKNHKENVAK) form a Matrin-type zinc finger. Low complexity predominate over residues 94–107 (ITPVTSTIPPTSTS). 3 disordered regions span residues 94–128 (ITPV…KGRW), 189–335 (SRWE…EPKV), and 356–376 (FKKR…GDDQ). WW domains are found at residues 122–155 (DPSK…KPEG) and 163–196 (TAVK…KPDD). A compositionally biased stretch (basic and acidic residues) spans 189 to 198 (SRWEKPDDFI). Polar residues predominate over residues 203–215 (DLPSSKVNENSLG). 2 stretches are compositionally biased toward basic and acidic residues: residues 218 to 229 (DESKSSDSHSDS) and 243 to 257 (ETEK…KNKN). Ser220, Ser227, and Ser229 each carry phosphoserine. At Ser262 the chain carries Phosphoserine. Basic and acidic residues predominate over residues 298–309 (QEIKQEVESHEE). The span at 316–326 (STENEYVSTSE) shows a compositional bias: polar residues. Residues 357–375 (KKRRTENGKSRNLRQRGDD) are interaction with SNRNP200. Basic and acidic residues predominate over residues 361 to 376 (TENGKSRNLRQRGDDQ).

Component of the spliceosome B complex. Associated with U2 snRNPs. Binds splicing factors SNRPB, SNRPC and SF1. Interacts via the WW domains with the Pro-rich domains of KHDRBS1/SAM68. Interacts via the WW domains with the Pro-rich domains of WBP11. Interacts with SNRNP200.

It localises to the nucleus. The protein localises to the nucleus speckle. Functionally, involved in pre-mRNA splicing as a component of the spliceosome. May play a role in cross-intron bridging of U1 and U2 snRNPs in the mammalian A complex. The protein is WW domain-binding protein 4 (WBP4) of Homo sapiens (Human).